The primary structure comprises 351 residues: Selenide, water dikinase (351 aa).

The active site involves Sec-15. Position 15 (Sec-15) is a non-standard amino acid, selenocysteine. ATP contacts are provided by residues Lys-18 and 47-49 (DNE). Asp-50 contacts Mg(2+). Residues Asp-67, Asp-90, and 138–140 (GHS) each bind ATP. Position 90 (Asp-90) interacts with Mg(2+). Residue Asp-227 coordinates Mg(2+).

It belongs to the selenophosphate synthase 1 family. Class I subfamily. Homodimer. Mg(2+) is required as a cofactor.

The enzyme catalyses hydrogenselenide + ATP + H2O = selenophosphate + AMP + phosphate + 2 H(+). In terms of biological role, synthesizes selenophosphate from selenide and ATP. The sequence is that of Selenide, water dikinase from Nitratidesulfovibrio vulgaris (strain ATCC 29579 / DSM 644 / CCUG 34227 / NCIMB 8303 / VKM B-1760 / Hildenborough) (Desulfovibrio vulgaris).